The chain runs to 210 residues: Thymidylate kinase (210 aa).

ATP is bound at residue 11–18; sequence GLEGAGKS.

It belongs to the thymidylate kinase family.

It carries out the reaction dTMP + ATP = dTDP + ADP. Phosphorylation of dTMP to form dTDP in both de novo and salvage pathways of dTTP synthesis. This is Thymidylate kinase from Histophilus somni (strain 2336) (Haemophilus somnus).